The primary structure comprises 353 residues: Holliday junction branch migration complex subunit RuvB (353 aa).

Positions 4–185 (ADRLITATGG…FGIVQRLEFY (182 aa)) are large ATPase domain (RuvB-L). ATP-binding positions include Ile-24, Arg-25, Gly-66, Lys-69, Thr-70, Thr-71, 132-134 (EDF), Arg-175, Tyr-185, and Arg-222. Thr-70 is a binding site for Mg(2+). The small ATPAse domain (RuvB-S) stretch occupies residues 186 to 256 (NIADLSTIVS…TADKALNLLD (71 aa)). The tract at residues 259–353 (EHGFDHQDRR…DDFGDEPVDL (95 aa)) is head domain (RuvB-H). Positions 295, 314, and 319 each coordinate DNA.

Belongs to the RuvB family. As to quaternary structure, homohexamer. Forms an RuvA(8)-RuvB(12)-Holliday junction (HJ) complex. HJ DNA is sandwiched between 2 RuvA tetramers; dsDNA enters through RuvA and exits via RuvB. An RuvB hexamer assembles on each DNA strand where it exits the tetramer. Each RuvB hexamer is contacted by two RuvA subunits (via domain III) on 2 adjacent RuvB subunits; this complex drives branch migration. In the full resolvosome a probable DNA-RuvA(4)-RuvB(12)-RuvC(2) complex forms which resolves the HJ.

The protein localises to the cytoplasm. The enzyme catalyses ATP + H2O = ADP + phosphate + H(+). The RuvA-RuvB-RuvC complex processes Holliday junction (HJ) DNA during genetic recombination and DNA repair, while the RuvA-RuvB complex plays an important role in the rescue of blocked DNA replication forks via replication fork reversal (RFR). RuvA specifically binds to HJ cruciform DNA, conferring on it an open structure. The RuvB hexamer acts as an ATP-dependent pump, pulling dsDNA into and through the RuvAB complex. RuvB forms 2 homohexamers on either side of HJ DNA bound by 1 or 2 RuvA tetramers; 4 subunits per hexamer contact DNA at a time. Coordinated motions by a converter formed by DNA-disengaged RuvB subunits stimulates ATP hydrolysis and nucleotide exchange. Immobilization of the converter enables RuvB to convert the ATP-contained energy into a lever motion, pulling 2 nucleotides of DNA out of the RuvA tetramer per ATP hydrolyzed, thus driving DNA branch migration. The RuvB motors rotate together with the DNA substrate, which together with the progressing nucleotide cycle form the mechanistic basis for DNA recombination by continuous HJ branch migration. Branch migration allows RuvC to scan DNA until it finds its consensus sequence, where it cleaves and resolves cruciform DNA. The protein is Holliday junction branch migration complex subunit RuvB of Pseudomonas syringae pv. syringae (strain B728a).